A 292-amino-acid polypeptide reads, in one-letter code: Putative sugar lactone lactonase YvrE (292 aa).

E15, N146, and D196 together coordinate a divalent metal cation.

It belongs to the SMP-30/CGR1 family. The cofactor is a divalent metal cation.

It is found in the cytoplasm. The chain is Putative sugar lactone lactonase YvrE (yvrE) from Bacillus subtilis (strain 168).